Reading from the N-terminus, the 184-residue chain is ATP synthase subunit b, chloroplastic (184 aa).

The helical transmembrane segment at 27-49 (LATNPINLSVVFGVLIFFGKGVL) threads the bilayer.

This sequence belongs to the ATPase B chain family. F-type ATPases have 2 components, F(1) - the catalytic core - and F(0) - the membrane proton channel. F(1) has five subunits: alpha(3), beta(3), gamma(1), delta(1), epsilon(1). F(0) has four main subunits: a(1), b(1), b'(1) and c(10-14). The alpha and beta chains form an alternating ring which encloses part of the gamma chain. F(1) is attached to F(0) by a central stalk formed by the gamma and epsilon chains, while a peripheral stalk is formed by the delta, b and b' chains.

The protein resides in the plastid. The protein localises to the chloroplast thylakoid membrane. Its function is as follows. F(1)F(0) ATP synthase produces ATP from ADP in the presence of a proton or sodium gradient. F-type ATPases consist of two structural domains, F(1) containing the extramembraneous catalytic core and F(0) containing the membrane proton channel, linked together by a central stalk and a peripheral stalk. During catalysis, ATP synthesis in the catalytic domain of F(1) is coupled via a rotary mechanism of the central stalk subunits to proton translocation. Component of the F(0) channel, it forms part of the peripheral stalk, linking F(1) to F(0). This Nasturtium officinale (Watercress) protein is ATP synthase subunit b, chloroplastic.